The chain runs to 193 residues: Ion-translocating oxidoreductase complex subunit A (193 aa).

A run of 6 helical transmembrane segments spans residues 5–25 (LLLFIGTVLVNNFVLVKFLGL), 47–67 (FVITLASICAWLVNHLILLPL), 72–92 (LRTMAYILVIAVVVQFTEMVV), 102–122 (LLGIFLPLITTNCAVLGVPLL), 134–154 (AIYGFSASIGFSLVMVLFAGV), and 171–191 (SIALVTAGLMALAFMGFAGLV).

The protein belongs to the NqrDE/RnfAE family. The complex is composed of six subunits: RnfA, RnfB, RnfC, RnfD, RnfE and RnfG.

It is found in the cell inner membrane. In terms of biological role, part of a membrane-bound complex that couples electron transfer with translocation of ions across the membrane. The chain is Ion-translocating oxidoreductase complex subunit A from Erwinia tasmaniensis (strain DSM 17950 / CFBP 7177 / CIP 109463 / NCPPB 4357 / Et1/99).